The sequence spans 72 residues: UPF0270 protein YheU (72 aa).

This sequence belongs to the UPF0270 family.

The chain is UPF0270 protein YheU from Escherichia coli (strain UTI89 / UPEC).